We begin with the raw amino-acid sequence, 256 residues long: Ubiquinone/menaquinone biosynthesis C-methyltransferase UbiE (256 aa).

The segment covering 1–12 (MNDQRKGDHAEP) has biased composition (basic and acidic residues). The disordered stretch occupies residues 1-23 (MNDQRKGDHAEPTTHFGYQDVPE). S-adenosyl-L-methionine is bound by residues Thr79, Asp100, and 128–129 (DA).

Belongs to the class I-like SAM-binding methyltransferase superfamily. MenG/UbiE family.

It catalyses the reaction a 2-demethylmenaquinol + S-adenosyl-L-methionine = a menaquinol + S-adenosyl-L-homocysteine + H(+). The catalysed reaction is a 2-methoxy-6-(all-trans-polyprenyl)benzene-1,4-diol + S-adenosyl-L-methionine = a 5-methoxy-2-methyl-3-(all-trans-polyprenyl)benzene-1,4-diol + S-adenosyl-L-homocysteine + H(+). It functions in the pathway quinol/quinone metabolism; menaquinone biosynthesis; menaquinol from 1,4-dihydroxy-2-naphthoate: step 2/2. Its pathway is cofactor biosynthesis; ubiquinone biosynthesis. Functionally, methyltransferase required for the conversion of demethylmenaquinol (DMKH2) to menaquinol (MKH2) and the conversion of 2-polyprenyl-6-methoxy-1,4-benzoquinol (DDMQH2) to 2-polyprenyl-3-methyl-6-methoxy-1,4-benzoquinol (DMQH2). This is Ubiquinone/menaquinone biosynthesis C-methyltransferase UbiE from Pseudomonas putida (strain GB-1).